The primary structure comprises 363 residues: uncharacterized protein (363 aa).

The N-terminal stretch at 1–20 (MKRAPLITGLLLISTSCAYA) is a signal peptide.

It belongs to the fimbrial protein family.

The protein localises to the fimbrium. Functionally, part of the yraHIJK fimbrial operon. Could contribute to adhesion to various surfaces in specific environmental niches. Increases adhesion to eukaryotic T24 bladder epithelial cells in the absence of fim operon. This is an uncharacterized protein from Escherichia coli (strain K12).